A 166-amino-acid polypeptide reads, in one-letter code: Regulatory protein RecX (166 aa).

The protein belongs to the RecX family.

It is found in the cytoplasm. Modulates RecA activity. The protein is Regulatory protein RecX of Shigella dysenteriae serotype 1 (strain Sd197).